A 60-amino-acid chain; its full sequence is Cytotoxin 1 (60 aa).

Disulfide bonds link Cys3–Cys21, Cys14–Cys38, Cys42–Cys53, and Cys54–Cys59.

It belongs to the three-finger toxin family. Short-chain subfamily. Type IA cytotoxin sub-subfamily. Monomer in solution; Homodimer and oligomer in the presence of negatively charged lipids forming a pore with a size ranging between 20 and 30 Angstroms. As to expression, expressed by the venom gland.

It localises to the secreted. The protein resides in the target cell membrane. Functionally, shows cytolytic activity on many different cells by forming pore in lipid membranes. In vivo, increases heart rate or kills the animal by cardiac arrest. In addition, it binds to heparin with high affinity, interacts with Kv channel-interacting protein 1 (KCNIP1) in a calcium-independent manner, and binds to integrin alpha-V/beta-3 (ITGAV/ITGB3) with moderate affinity. This Naja naja (Indian cobra) protein is Cytotoxin 1.